The sequence spans 532 residues: Cytochrome c oxidase subunit 1 (532 aa).

The next 3 membrane-spanning stretches (helical) occupy residues methionine 1–alanine 21, leucine 27–valine 47, and glycine 69–phenylalanine 89. Residue histidine 114 coordinates heme b. 8 consecutive transmembrane segments (helical) span residues threonine 115–valine 135, leucine 143–threonine 163, leucine 185–phenylalanine 205, isoleucine 212–valine 232, glycine 263–valine 283, leucine 296–leucine 316, leucine 328–leucine 348, and methionine 366–isoleucine 386. Cu cation-binding residues include histidine 264, histidine 314, and histidine 315. The heme b site is built by histidine 402 and histidine 404. Helical transmembrane passes span valine 403 to threonine 423, phenylalanine 442 to methionine 462, and valine 496 to valine 516.

Belongs to the heme-copper respiratory oxidase family. It depends on Cu(2+) as a cofactor. Heme b serves as cofactor.

It localises to the cell membrane. It carries out the reaction 4 Fe(II)-[cytochrome c] + O2 + 8 H(+)(in) = 4 Fe(III)-[cytochrome c] + 2 H2O + 4 H(+)(out). It functions in the pathway energy metabolism; oxidative phosphorylation. Cytochrome c oxidase is the component of the respiratory chain that catalyzes the reduction of oxygen to water. Subunits 1-3 form the functional core of the enzyme complex. Co I is the catalytic subunit of the enzyme. Electrons originating in cytochrome c are transferred via the copper A center of subunit 2 and heme a of subunit 1 to the bimetallic center formed by heme a3 and copper B. This cytochrome c oxidase shows proton pump activity across the membrane in addition to the electron transfer. The polypeptide is Cytochrome c oxidase subunit 1 (ctaD) (Rhodobacter capsulatus (Rhodopseudomonas capsulata)).